The following is an 83-amino-acid chain: Exodeoxyribonuclease 7 small subunit (83 aa).

It belongs to the XseB family. As to quaternary structure, heterooligomer composed of large and small subunits.

It is found in the cytoplasm. The enzyme catalyses Exonucleolytic cleavage in either 5'- to 3'- or 3'- to 5'-direction to yield nucleoside 5'-phosphates.. Functionally, bidirectionally degrades single-stranded DNA into large acid-insoluble oligonucleotides, which are then degraded further into small acid-soluble oligonucleotides. The polypeptide is Exodeoxyribonuclease 7 small subunit (Sinorhizobium medicae (strain WSM419) (Ensifer medicae)).